The chain runs to 230 residues: Uracil-DNA glycosylase (230 aa).

Catalysis depends on Asp70, which acts as the Proton acceptor.

This sequence belongs to the uracil-DNA glycosylase (UDG) superfamily. UNG family.

It is found in the cytoplasm. It catalyses the reaction Hydrolyzes single-stranded DNA or mismatched double-stranded DNA and polynucleotides, releasing free uracil.. Excises uracil residues from the DNA which can arise as a result of misincorporation of dUMP residues by DNA polymerase or due to deamination of cytosine. The polypeptide is Uracil-DNA glycosylase (Pseudomonas fluorescens (strain ATCC BAA-477 / NRRL B-23932 / Pf-5)).